A 424-amino-acid chain; its full sequence is UDP-N-acetylglucosamine 1-carboxyvinyltransferase (424 aa).

A phosphoenolpyruvate-binding site is contributed by 22–23; the sequence is KN. Position 93 (R93) interacts with UDP-N-acetyl-alpha-D-glucosamine. Residue C117 is the Proton donor of the active site. C117 is subject to 2-(S-cysteinyl)pyruvic acid O-phosphothioketal. UDP-N-acetyl-alpha-D-glucosamine is bound by residues 122 to 126, D307, and V329; that span reads RPIDL.

The protein belongs to the EPSP synthase family. MurA subfamily.

The protein resides in the cytoplasm. The catalysed reaction is phosphoenolpyruvate + UDP-N-acetyl-alpha-D-glucosamine = UDP-N-acetyl-3-O-(1-carboxyvinyl)-alpha-D-glucosamine + phosphate. It functions in the pathway cell wall biogenesis; peptidoglycan biosynthesis. Cell wall formation. Adds enolpyruvyl to UDP-N-acetylglucosamine. The sequence is that of UDP-N-acetylglucosamine 1-carboxyvinyltransferase from Chlorobium luteolum (strain DSM 273 / BCRC 81028 / 2530) (Pelodictyon luteolum).